Reading from the N-terminus, the 441-residue chain is Endothelin receptor type B (441 aa).

An N-terminal signal peptide occupies residues methionine 1 to glycine 26. The Extracellular segment spans residues glutamate 27–lysine 100. The interval glutamate 30 to glutamine 90 is disordered. Over residues leucine 47–arginine 65 the composition is skewed to polar residues. Asparagine 60 carries N-linked (GlcNAc...) asparagine glycosylation. Residues tyrosine 101–isoleucine 125 traverse the membrane as a helical segment. Residues tyrosine 126–asparagine 136 lie on the Cytoplasmic side of the membrane. A helical transmembrane segment spans residues isoleucine 137–leucine 162. Over alanine 163 to lysine 174 the chain is Extracellular. The cysteines at positions 173 and 254 are disulfide-linked. Residues leucine 175–isoleucine 196 form a helical membrane-spanning segment. The Cytoplasmic segment spans residues aspartate 197–threonine 217. A helical transmembrane segment spans residues alanine 218 to valine 242. The Extracellular portion of the chain corresponds to threonine 243–threonine 270. The helical transmembrane segment at alanine 271–methionine 295 threads the bilayer. The Cytoplasmic segment spans residues threonine 296–threonine 323. The residue at position 304 (serine 304) is a Phosphoserine. Residues valine 324–tyrosine 349 form a helical membrane-spanning segment. Topologically, residues aspartate 350 to serine 361 are extracellular. The chain crosses the membrane as a helical span at residues phenylalanine 362–valine 388. The Cytoplasmic segment spans residues serine 389–serine 441. S-palmitoyl cysteine attachment occurs at residues cysteine 402 and cysteine 404. Serine 418 is modified (phosphoserine). Tyrosine 438 bears the Phosphotyrosine mark. Phosphoserine is present on residues serine 439, serine 440, and serine 441.

It belongs to the G-protein coupled receptor 1 family. Endothelin receptor subfamily. EDNRB sub-subfamily.

It localises to the cell membrane. Its function is as follows. Non-specific receptor for endothelin 1, 2, and 3. Mediates its action by association with G proteins that activate a phosphatidylinositol-calcium second messenger system. This chain is Endothelin receptor type B (EDNRB), found in Oryctolagus cuniculus (Rabbit).